We begin with the raw amino-acid sequence, 261 residues long: U1 small nuclear ribonucleoprotein 70 kDa homolog (261 aa).

The 79-residue stretch at 100-178 folds into the RRM domain; the sequence is KTMFLSRLSY…RRIVVDVERG (79 aa). The tract at residues 192–261 is disordered; it reads GLGGRHYTKE…DSSPKRRRYN (70 aa). The span at 198-215 shows a compositional bias: basic and acidic residues; sequence YTKERPRRERGSRFRGDS. Positions 216 to 235 are enriched in gly residues; it reads GFRGGYRGGFRKSSGGGSRF.

Component of the spliceosome, where it is associated with snRNP U1. Associates with U1 snRNA.

It is found in the nucleus. In terms of biological role, involved in nuclear mRNA splicing. Essential for growth. The protein is U1 small nuclear ribonucleoprotein 70 kDa homolog of Schizosaccharomyces pombe (strain 972 / ATCC 24843) (Fission yeast).